The following is a 295-amino-acid chain: Ribosomal protein L11 methyltransferase (295 aa).

4 residues coordinate S-adenosyl-L-methionine: Thr146, Gly167, Asp189, and Asn231.

Belongs to the methyltransferase superfamily. PrmA family.

The protein localises to the cytoplasm. It catalyses the reaction L-lysyl-[protein] + 3 S-adenosyl-L-methionine = N(6),N(6),N(6)-trimethyl-L-lysyl-[protein] + 3 S-adenosyl-L-homocysteine + 3 H(+). Functionally, methylates ribosomal protein L11. This Vibrio cholerae serotype O1 (strain ATCC 39541 / Classical Ogawa 395 / O395) protein is Ribosomal protein L11 methyltransferase.